A 105-amino-acid chain; its full sequence is uncharacterized protein (105 aa).

A helical membrane pass occupies residues 64–84 (ILLISIFFLLLFALPQHTMGI).

It is found in the membrane. This is an uncharacterized protein from Saccharomyces cerevisiae (strain ATCC 204508 / S288c) (Baker's yeast).